Consider the following 622-residue polypeptide: Phosphatidylinositol 4-kinase gamma 6 (622 aa).

The Ubiquitin-like; degenerate domain maps to 38–95; that stretch reads RRVFVQTDTGCVLGVELDRNDNVHTVKKRLQIAFNFPTEESSLTFGDMVLKNDLSAVR. The PI3K/PI4K catalytic domain occupies 158–459; that stretch reads GVEPIPVNGG…LTTEQDVLSP (302 aa). The segment at 164 to 170 is G-loop; sequence VNGGLGG. ATP is bound by residues 165–171, lysine 186, and 277–280; these read NGGLGGA and QKFV. The interval 310–318 is catalytic loop; it reads LNTDRHGGN. Residues 339–365 are activation loop; the sequence is PIDHGLCLPETLEDPYFEWIHWPQASI. Residue aspartate 341 coordinates ATP. A Phosphoserine modification is found at serine 565.

It belongs to the PI3/PI4-kinase family. Type II PI4K subfamily.

The catalysed reaction is a 1,2-diacyl-sn-glycero-3-phospho-(1D-myo-inositol) + ATP = a 1,2-diacyl-sn-glycero-3-phospho-(1D-myo-inositol 4-phosphate) + ADP + H(+). In terms of biological role, the phosphorylation of phosphatidylinositol (PI) to PI4P is the first committed step in the generation of phosphatidylinositol 4,5-bisphosphate (PIP2), a precursor of the second messenger inositol 1,4,5-trisphosphate (InsP3). This is Phosphatidylinositol 4-kinase gamma 6 (PI4KG6) from Arabidopsis thaliana (Mouse-ear cress).